Reading from the N-terminus, the 700-residue chain is Elongation factor G (700 aa).

Residues 8–290 (ERYRNIGISA…GVIDFMPSPI (283 aa)) form the tr-type G domain. GTP is bound by residues 17–24 (AHIDAGKT), 88–92 (DTPGH), and 142–145 (NKMD).

It belongs to the TRAFAC class translation factor GTPase superfamily. Classic translation factor GTPase family. EF-G/EF-2 subfamily.

The protein resides in the cytoplasm. In terms of biological role, catalyzes the GTP-dependent ribosomal translocation step during translation elongation. During this step, the ribosome changes from the pre-translocational (PRE) to the post-translocational (POST) state as the newly formed A-site-bound peptidyl-tRNA and P-site-bound deacylated tRNA move to the P and E sites, respectively. Catalyzes the coordinated movement of the two tRNA molecules, the mRNA and conformational changes in the ribosome. The protein is Elongation factor G of Methylibium petroleiphilum (strain ATCC BAA-1232 / LMG 22953 / PM1).